Reading from the N-terminus, the 222-residue chain is N-acetyltransferase 8B (222 aa).

Topologically, residues 1-42 are cytoplasmic; that stretch reads MVSYHICEYQDSDYKSVVDVFTKGAEEYIPSTFRHLLLLPRT. A helical; Signal-anchor for type II membrane protein membrane pass occupies residues 43–67; the sequence is LLLLLGVSLALVLVSGSWLLAVVCI. The region spanning 62 to 217 is the N-acetyltransferase domain; the sequence is LAVVCIFFLL…VGIRFVQLNY (156 aa). Residues 68–222 are Lumenal-facing; that stretch reads FFLLPFLWFL…VQLNYSFPSA (155 aa). Lys99 is modified (N6-acetyllysine).

Belongs to the NAT8 family. In terms of processing, acetylation on Lys-99 modulates enzymatic activity.

It is found in the endoplasmic reticulum-Golgi intermediate compartment membrane. The protein resides in the endoplasmic reticulum membrane. The catalysed reaction is L-lysyl-[protein] + acetyl-CoA = N(6)-acetyl-L-lysyl-[protein] + CoA + H(+). Its function is as follows. Endoplasmic reticulum (ER)-membrane-bound lysine N-acetyltransferase catalyzing the N6-acetylation of lysine residues in the lumen of the ER in various proteins, including PROM1 and BACE1, using acetyl-CoA as acetyl donor. Thereby, may regulate apoptosis through the acetylation and the regulation of the expression of PROM1. Acetylates and stabilizes BACE1 immature protein, leading to increased steady-state levels in neurons. By acting on BACE1 expression, may regulate amyloid beta-peptide formation. N(6)-lysine acetylation in ER maintains protein homeostasis and regulates reticulophagy. The sequence is that of N-acetyltransferase 8B from Rattus norvegicus (Rat).